The sequence spans 293 residues: 4-hydroxy-tetrahydrodipicolinate synthase (293 aa).

Thr-44 contacts pyruvate. Tyr-132 serves as the catalytic Proton donor/acceptor. The active-site Schiff-base intermediate with substrate is Lys-160. Ile-204 provides a ligand contact to pyruvate.

The protein belongs to the DapA family. As to quaternary structure, homotetramer; dimer of dimers.

Its subcellular location is the cytoplasm. It catalyses the reaction L-aspartate 4-semialdehyde + pyruvate = (2S,4S)-4-hydroxy-2,3,4,5-tetrahydrodipicolinate + H2O + H(+). Its pathway is amino-acid biosynthesis; L-lysine biosynthesis via DAP pathway; (S)-tetrahydrodipicolinate from L-aspartate: step 3/4. Its function is as follows. Catalyzes the condensation of (S)-aspartate-beta-semialdehyde [(S)-ASA] and pyruvate to 4-hydroxy-tetrahydrodipicolinate (HTPA). The chain is 4-hydroxy-tetrahydrodipicolinate synthase from Hyphomonas neptunium (strain ATCC 15444).